Here is a 402-residue protein sequence, read N- to C-terminus: Nicotinate phosphoribosyltransferase (402 aa).

Phosphohistidine; by autocatalysis is present on H224.

Belongs to the NAPRTase family. Post-translationally, transiently phosphorylated on a His residue during the reaction cycle. Phosphorylation strongly increases the affinity for substrates and increases the rate of nicotinate D-ribonucleotide production. Dephosphorylation regenerates the low-affinity form of the enzyme, leading to product release.

The enzyme catalyses nicotinate + 5-phospho-alpha-D-ribose 1-diphosphate + ATP + H2O = nicotinate beta-D-ribonucleotide + ADP + phosphate + diphosphate. The protein operates within cofactor biosynthesis; NAD(+) biosynthesis; nicotinate D-ribonucleotide from nicotinate: step 1/1. Its function is as follows. Catalyzes the synthesis of beta-nicotinate D-ribonucleotide from nicotinate and 5-phospho-D-ribose 1-phosphate at the expense of ATP. This is Nicotinate phosphoribosyltransferase from Neisseria meningitidis serogroup C (strain 053442).